Consider the following 552-residue polypeptide: Chaperonin GroEL (552 aa).

ATP-binding positions include 30-33 (TLGP), Lys-51, 87-91 (DGTTT), Gly-415, 479-481 (NAA), and Asp-495.

This sequence belongs to the chaperonin (HSP60) family. In terms of assembly, forms a cylinder of 14 subunits composed of two heptameric rings stacked back-to-back. Interacts with the co-chaperonin GroES.

It is found in the cytoplasm. It catalyses the reaction ATP + H2O + a folded polypeptide = ADP + phosphate + an unfolded polypeptide.. In terms of biological role, together with its co-chaperonin GroES, plays an essential role in assisting protein folding. The GroEL-GroES system forms a nano-cage that allows encapsulation of the non-native substrate proteins and provides a physical environment optimized to promote and accelerate protein folding. The polypeptide is Chaperonin GroEL (Nitrosospira multiformis (strain ATCC 25196 / NCIMB 11849 / C 71)).